Here is a 1072-residue protein sequence, read N- to C-terminus: Carbamoyl phosphate synthase large chain (1072 aa).

Positions 1–401 (MPKRLDINTI…SLLKAVRSLE (401 aa)) are carboxyphosphate synthetic domain. The ATP site is built by R129, R169, G175, G176, K208, I210, E215, G241, V242, H243, Q284, and E298. One can recognise an ATP-grasp 1 domain in the interval 133–327 (RTLMQELNEP…IAKLAAKIAV (195 aa)). Mg(2+) is bound by residues Q284, E298, and N300. Q284, E298, and N300 together coordinate Mn(2+). The segment at 402 to 546 (LGIYHLELDH…YSTYADENES (145 aa)) is oligomerization domain. Residues 547–929 (IVTDRKSVVV…ALYKGLVASG (383 aa)) form a carbamoyl phosphate synthetic domain region. One can recognise an ATP-grasp 2 domain in the interval 671–861 (EAALTKLGIP…MANVATKVIL (191 aa)). Positions 707, 746, 752, 777, 778, 779, 780, 820, and 832 each coordinate ATP. Q820, E832, and N834 together coordinate Mg(2+). The Mn(2+) site is built by Q820, E832, and N834. The MGS-like domain occupies 930 to 1072 (INIPTHGSVI…QTKRHEVVHA (143 aa)). The tract at residues 930 to 1072 (INIPTHGSVI…QTKRHEVVHA (143 aa)) is allosteric domain.

This sequence belongs to the CarB family. As to quaternary structure, composed of two chains; the small (or glutamine) chain promotes the hydrolysis of glutamine to ammonia, which is used by the large (or ammonia) chain to synthesize carbamoyl phosphate. Tetramer of heterodimers (alpha,beta)4. Mg(2+) is required as a cofactor. Mn(2+) serves as cofactor.

The enzyme catalyses hydrogencarbonate + L-glutamine + 2 ATP + H2O = carbamoyl phosphate + L-glutamate + 2 ADP + phosphate + 2 H(+). The catalysed reaction is hydrogencarbonate + NH4(+) + 2 ATP = carbamoyl phosphate + 2 ADP + phosphate + 2 H(+). The protein operates within amino-acid biosynthesis; L-arginine biosynthesis; carbamoyl phosphate from bicarbonate: step 1/1. Its pathway is pyrimidine metabolism; UMP biosynthesis via de novo pathway; (S)-dihydroorotate from bicarbonate: step 1/3. Its function is as follows. Large subunit of the glutamine-dependent carbamoyl phosphate synthetase (CPSase). CPSase catalyzes the formation of carbamoyl phosphate from the ammonia moiety of glutamine, carbonate, and phosphate donated by ATP, constituting the first step of 2 biosynthetic pathways, one leading to arginine and/or urea and the other to pyrimidine nucleotides. The large subunit (synthetase) binds the substrates ammonia (free or transferred from glutamine from the small subunit), hydrogencarbonate and ATP and carries out an ATP-coupled ligase reaction, activating hydrogencarbonate by forming carboxy phosphate which reacts with ammonia to form carbamoyl phosphate. The protein is Carbamoyl phosphate synthase large chain of Bacillus cereus (strain AH820).